The chain runs to 397 residues: Enoyl-[acyl-carrier-protein] reductase [NADH] (397 aa).

Residues 48 to 53, 74 to 75, 111 to 112, and 139 to 140 contribute to the NAD(+) site; these read GASTGY, FE, DA, and VA. Y225 is a substrate binding site. Y235 functions as the Proton donor in the catalytic mechanism. NAD(+)-binding positions include K244 and 273–275; that span reads VVT.

The protein belongs to the TER reductase family. In terms of assembly, monomer.

It catalyses the reaction a 2,3-saturated acyl-[ACP] + NAD(+) = a (2E)-enoyl-[ACP] + NADH + H(+). Its pathway is lipid metabolism; fatty acid biosynthesis. Involved in the final reduction of the elongation cycle of fatty acid synthesis (FAS II). Catalyzes the reduction of a carbon-carbon double bond in an enoyl moiety that is covalently linked to an acyl carrier protein (ACP). This chain is Enoyl-[acyl-carrier-protein] reductase [NADH], found in Burkholderia mallei (strain SAVP1).